A 235-amino-acid polypeptide reads, in one-letter code: Large ribosomal subunit protein uL1 (235 aa).

This sequence belongs to the universal ribosomal protein uL1 family. In terms of assembly, part of the 50S ribosomal subunit.

In terms of biological role, binds directly to 23S rRNA. The L1 stalk is quite mobile in the ribosome, and is involved in E site tRNA release. Protein L1 is also a translational repressor protein, it controls the translation of the L11 operon by binding to its mRNA. In Corynebacterium diphtheriae (strain ATCC 700971 / NCTC 13129 / Biotype gravis), this protein is Large ribosomal subunit protein uL1.